Here is a 337-residue protein sequence, read N- to C-terminus: B3 domain-containing protein REM16 (337 aa).

2 DNA-binding regions (TF-B3) span residues 22 to 116 and 223 to 321; these read TLHF…FDGQ and FLVF…FRGE.

The protein resides in the nucleus. In Arabidopsis thaliana (Mouse-ear cress), this protein is B3 domain-containing protein REM16 (REM16).